A 114-amino-acid chain; its full sequence is Cytochrome c oxidase subunit 7A2-like, mitochondrial (114 aa).

A mitochondrion-targeting transit peptide spans 1 to 55 (MYYKFSGFTQKLAGAWASDAYSPQGLRPVVSTEAPPIIFATPTKLSSGPTAYDYA). Lysine 69 is subject to N6-acetyllysine. Residues 82 to 107 (PDQMLYRTTMALTVGGTIYCLIALYM) traverse the membrane as a helical segment.

It belongs to the cytochrome c oxidase VIIa family. Interacts with the mitochondrial respiratory complexes III (CIII) and IV (CIV), promoting their association.

Its subcellular location is the mitochondrion inner membrane. Assembly factor that mediates the formation of some mitochondrial respiratory supercomplexes (respirasomes), thereby promoting oxidative phosphorylation and energy metabolism. Acts as a molecular adapter that associates with both mitochondrial respiratory complexes III (CIII) and IV (CIV), promoting their association. Mediates the formation of various mitochondrial respiratory supercomplexes, such as MCIII(2)IV(2), composed of two CIII and two CIV, and the CS-respirasome (MCI(1)III(2)IV(2)), composed of one CI, two CIII and two CIV. Not involved in the formation of the canonical respirasome (MCI(1)III(2)IV(1)), composed of one CI, two CIII and one CIV. The formation of different respirasomes is important for cell adaptation to oxygen conditions and prevent metabolic exhaustion: supercomplexes mediated by COX7A2L/SCAF1 are required to maintain oxidative phosphorylation upon low oxygen conditions and promote metabolic rewiring toward glycolysis. The chain is Cytochrome c oxidase subunit 7A2-like, mitochondrial from Bos taurus (Bovine).